The chain runs to 330 residues: Ketol-acid reductoisomerase (NADP(+)) (330 aa).

A KARI N-terminal Rossmann domain is found at 2 to 182 (VKVYYDADAN…GCTKAGVFET (181 aa)). NADP(+) contacts are provided by residues 25-28 (YGSQ), Arg-48, Ser-51, and 83-86 (DEIQ). His-108 is an active-site residue. Position 134 (Gly-134) interacts with NADP(+). The 146-residue stretch at 183–328 (SFREETETDL…ARLREMMPWL (146 aa)) folds into the KARI C-terminal knotted domain. Asp-191, Glu-195, Glu-227, and Glu-231 together coordinate Mg(2+). Ser-252 serves as a coordination point for substrate.

This sequence belongs to the ketol-acid reductoisomerase family. The cofactor is Mg(2+).

The catalysed reaction is (2R)-2,3-dihydroxy-3-methylbutanoate + NADP(+) = (2S)-2-acetolactate + NADPH + H(+). The enzyme catalyses (2R,3R)-2,3-dihydroxy-3-methylpentanoate + NADP(+) = (S)-2-ethyl-2-hydroxy-3-oxobutanoate + NADPH + H(+). Its pathway is amino-acid biosynthesis; L-isoleucine biosynthesis; L-isoleucine from 2-oxobutanoate: step 2/4. The protein operates within amino-acid biosynthesis; L-valine biosynthesis; L-valine from pyruvate: step 2/4. Involved in the biosynthesis of branched-chain amino acids (BCAA). Catalyzes an alkyl-migration followed by a ketol-acid reduction of (S)-2-acetolactate (S2AL) to yield (R)-2,3-dihydroxy-isovalerate. In the isomerase reaction, S2AL is rearranged via a Mg-dependent methyl migration to produce 3-hydroxy-3-methyl-2-ketobutyrate (HMKB). In the reductase reaction, this 2-ketoacid undergoes a metal-dependent reduction by NADPH to yield (R)-2,3-dihydroxy-isovalerate. This chain is Ketol-acid reductoisomerase (NADP(+)), found in Desulforamulus reducens (strain ATCC BAA-1160 / DSM 100696 / MI-1) (Desulfotomaculum reducens).